The following is a 141-amino-acid chain: Putative pre-16S rRNA nuclease (141 aa).

This sequence belongs to the YqgF nuclease family.

It is found in the cytoplasm. In terms of biological role, could be a nuclease involved in processing of the 5'-end of pre-16S rRNA. This chain is Putative pre-16S rRNA nuclease, found in Natranaerobius thermophilus (strain ATCC BAA-1301 / DSM 18059 / JW/NM-WN-LF).